Reading from the N-terminus, the 175-residue chain is FMN reductase (NADH) RutF (175 aa).

It belongs to the non-flavoprotein flavin reductase family. RutF subfamily.

The catalysed reaction is FMNH2 + NAD(+) = FMN + NADH + 2 H(+). In terms of biological role, catalyzes the reduction of FMN to FMNH2 which is used to reduce pyrimidine by RutA via the Rut pathway. This is FMN reductase (NADH) RutF from Serratia proteamaculans (strain 568).